Consider the following 633-residue polypeptide: Probable potassium transport system protein Kup (633 aa).

12 consecutive transmembrane segments (helical) span residues 21 to 41 (LAVGSVGVVYGDIGTSPLYAF), 61 to 81 (LVSLMFWALTIIVTMKYVLFL), 107 to 127 (TAVLMLLGLLGAALFLGDAMI), 145 to 165 (PTLSDYIVPISVAILALLFAI), 176 to 196 (FFGPITAIWFIVMGLAGIMHI), 219 to 239 (GFLGVVVLGAVFLTVTGAEAL), 255 to 275 (WFVLVFPSLTLNYLGQGALVL), 293 to 313 (ALLPVVILATMATIIASQAVI), 345 to 365 (IFLPSVNAILFFGVIFLVLSF), 371 to 391 (LATAYGISVTGAMVVTSIMAF), 402 to 422 (LPMAIAVLTPLLLLEFVFLGA), and 427 to 447 (IHDGGYVPVLIATAFTVIMWT).

It belongs to the HAK/KUP transporter (TC 2.A.72) family.

The protein resides in the cell inner membrane. The enzyme catalyses K(+)(in) + H(+)(in) = K(+)(out) + H(+)(out). In terms of biological role, transport of potassium into the cell. Likely operates as a K(+):H(+) symporter. The protein is Probable potassium transport system protein Kup of Rhizobium rhizogenes (strain K84 / ATCC BAA-868) (Agrobacterium radiobacter).